Here is a 614-residue protein sequence, read N- to C-terminus: Aspartate--tRNA ligase (614 aa).

E174 contributes to the L-aspartate binding site. Residues 198-201 are aspartate; the sequence is QLFK. An L-aspartate-binding site is contributed by R220. Residues 220–222 and Q229 each bind ATP; that span reads RDE. H448 is an L-aspartate binding site. E482 is an ATP binding site. R489 is an L-aspartate binding site. An ATP-binding site is contributed by 534–537; that stretch reads GLDR. A disordered region spans residues 587-614; it reads YEDSVKETEQRLEKEAQEDADKNSTWDE.

It belongs to the class-II aminoacyl-tRNA synthetase family. Type 1 subfamily. Homodimer.

It is found in the cytoplasm. The catalysed reaction is tRNA(Asp) + L-aspartate + ATP = L-aspartyl-tRNA(Asp) + AMP + diphosphate. In terms of biological role, catalyzes the attachment of L-aspartate to tRNA(Asp) in a two-step reaction: L-aspartate is first activated by ATP to form Asp-AMP and then transferred to the acceptor end of tRNA(Asp). In Lactobacillus johnsonii (strain CNCM I-12250 / La1 / NCC 533), this protein is Aspartate--tRNA ligase.